The following is a 306-amino-acid chain: Mycothiol acetyltransferase (306 aa).

N-acetyltransferase domains are found at residues 5 to 162 (VWAE…TFVP) and 155 to 306 (VRLR…AQGS). Residues 82–84 (LIV) and 90–95 (RRGHGT) contribute to the acetyl-CoA site. Positions 182, 222, and 238 each coordinate 1D-myo-inositol 2-(L-cysteinylamino)-2-deoxy-alpha-D-glucopyranoside. Residues 242-244 (VGV) and 249-255 (QGGGLGK) each bind acetyl-CoA. Tyr-276 lines the 1D-myo-inositol 2-(L-cysteinylamino)-2-deoxy-alpha-D-glucopyranoside pocket.

Belongs to the acetyltransferase family. MshD subfamily. As to quaternary structure, monomer.

The enzyme catalyses 1D-myo-inositol 2-(L-cysteinylamino)-2-deoxy-alpha-D-glucopyranoside + acetyl-CoA = mycothiol + CoA + H(+). In terms of biological role, catalyzes the transfer of acetyl from acetyl-CoA to desacetylmycothiol (Cys-GlcN-Ins) to form mycothiol. In Saccharomonospora viridis (strain ATCC 15386 / DSM 43017 / JCM 3036 / CCUG 5913 / NBRC 12207 / NCIMB 9602 / P101) (Thermoactinomyces viridis), this protein is Mycothiol acetyltransferase.